The following is a 458-amino-acid chain: UDP-N-acetylmuramate--L-alanine ligase (458 aa).

115–121 (GSHGKTT) is a binding site for ATP.

Belongs to the MurCDEF family.

The protein resides in the cytoplasm. It catalyses the reaction UDP-N-acetyl-alpha-D-muramate + L-alanine + ATP = UDP-N-acetyl-alpha-D-muramoyl-L-alanine + ADP + phosphate + H(+). It participates in cell wall biogenesis; peptidoglycan biosynthesis. Its function is as follows. Cell wall formation. The sequence is that of UDP-N-acetylmuramate--L-alanine ligase from Anaeromyxobacter dehalogenans (strain 2CP-1 / ATCC BAA-258).